The primary structure comprises 149 residues: Putative pre-16S rRNA nuclease (149 aa).

It belongs to the YqgF nuclease family.

It is found in the cytoplasm. Could be a nuclease involved in processing of the 5'-end of pre-16S rRNA. The polypeptide is Putative pre-16S rRNA nuclease (Heliobacterium modesticaldum (strain ATCC 51547 / Ice1)).